Consider the following 70-residue polypeptide: U2-agatoxin-Ao1r (70 aa).

Positions 1 to 20 (MRSIISLILISAMVFSMIAP) are cleaved as a signal peptide. The propeptide occupies 21 to 34 (VPEEERLQLSEDER). Disulfide bonds link C37–C53, C44–C58, and C52–C68. The residue at position 69 (L69) is a Leucine amide.

This sequence belongs to the neurotoxin 01 (U2-agtx) family. Expressed by the venom gland.

The protein localises to the secreted. In terms of biological role, insect active toxin causing rapid but reversible paralysis in crickets. No activity shown in mammals. Does not show effect on mammalian voltage-gated calcium channels. In Agelena orientalis (Funnel-web spider), this protein is U2-agatoxin-Ao1r.